We begin with the raw amino-acid sequence, 762 residues long: 5-methyltetrahydropteroyltriglutamate--homocysteine methyltransferase (762 aa).

5-methyltetrahydropteroyltri-L-glutamate is bound by residues 17-20 (REWK) and K111. L-homocysteine is bound by residues 435–437 (IGS) and E488. Residues 435-437 (IGS) and E488 contribute to the L-methionine site. 5-methyltetrahydropteroyltri-L-glutamate contacts are provided by residues 519-520 (RC) and W565. D603 is an L-homocysteine binding site. Residue D603 participates in L-methionine binding. E609 lines the 5-methyltetrahydropteroyltri-L-glutamate pocket. Zn(2+)-binding residues include H645, C647, and E669. Catalysis depends on H698, which acts as the Proton donor. C730 provides a ligand contact to Zn(2+).

Belongs to the vitamin-B12 independent methionine synthase family. Zn(2+) serves as cofactor.

It carries out the reaction 5-methyltetrahydropteroyltri-L-glutamate + L-homocysteine = tetrahydropteroyltri-L-glutamate + L-methionine. It functions in the pathway amino-acid biosynthesis; L-methionine biosynthesis via de novo pathway; L-methionine from L-homocysteine (MetE route): step 1/1. Its function is as follows. Catalyzes the transfer of a methyl group from 5-methyltetrahydrofolate to homocysteine resulting in methionine formation. The sequence is that of 5-methyltetrahydropteroyltriglutamate--homocysteine methyltransferase from Bacillus cereus (strain AH820).